A 57-amino-acid chain; its full sequence is Large ribosomal subunit protein bL32 (57 aa).

The protein belongs to the bacterial ribosomal protein bL32 family.

The polypeptide is Large ribosomal subunit protein bL32 (Geobacillus sp. (strain WCH70)).